The sequence spans 471 residues: MSRRVVRQSKFRHVFGQAAKADQAYEDIRVSKVTWDSAFCAVNPKFLAIIVEAGGGGAFIVLPLAKTGRVDKNYPLVTGHTGPVLDIDWCPHNDNVIASASDDTTVMVWQIPDYTPVRNITEPVITLEGHSKRVGILSWHPTARNVLLSAGGDNVIIIWNVGTGEVLLSLDDIHPDVIHSVCWNSNGSLLATTCKDKTLRIIDPRKSQVVAERARPHEGARPLRAVFTADGKLLSTGFSRMSERQLALWDPNNFEEPVALQEMDTSNGVLLPFYDPDSSIVYLCGKGDSSIRYFEITEEPPFVHYLNTFSSKEPQRGMGFMPKRGLDVSKCEIARFYKLHERKCEPIIMTVPRKSDLFQDDLYPDTPGPEPALEADEWLSGQDAEPVLISLKEGYVPPKHRELRVTKRNILDVRPPASPRRSQSASEAPLSQHTLETLLEEIKALRDRVQAQEERITALENMLCELVDGTD.

WD repeat units lie at residues 79 to 119 (GHTG…PVRN), 129 to 169 (GHSK…VLLS), 173 to 212 (IHPDVIHSVCWNSNGSLLATTCKDKTLRIIDPRKSQVVAE), 216 to 259 (PHEG…EPVA), and 264 to 304 (DTSN…PFVH). Residues 410-433 (ILDVRPPASPRRSQSASEAPLSQH) form a disordered region. The segment covering 419–429 (PRRSQSASEAP) has biased composition (low complexity). Residues 426–468 (SEAPLSQHTLETLLEEIKALRDRVQAQEERITALENMLCELVD) are a coiled coil.

In Mus musculus (Mouse), this protein is Coronin-6 (Coro6).